Consider the following 250-residue polypeptide: NADH-quinone oxidoreductase subunit C (250 aa).

The protein belongs to the complex I 30 kDa subunit family. In terms of assembly, NDH-1 is composed of 14 different subunits. Subunits NuoB, C, D, E, F, and G constitute the peripheral sector of the complex.

It is found in the cell inner membrane. The catalysed reaction is a quinone + NADH + 5 H(+)(in) = a quinol + NAD(+) + 4 H(+)(out). NDH-1 shuttles electrons from NADH, via FMN and iron-sulfur (Fe-S) centers, to quinones in the respiratory chain. The immediate electron acceptor for the enzyme in this species is believed to be ubiquinone. Couples the redox reaction to proton translocation (for every two electrons transferred, four hydrogen ions are translocated across the cytoplasmic membrane), and thus conserves the redox energy in a proton gradient. This is NADH-quinone oxidoreductase subunit C from Xanthomonas oryzae pv. oryzae (strain PXO99A).